We begin with the raw amino-acid sequence, 159 residues long: Keratin-associated protein 9-3 (159 aa).

Tandem repeats lie at residues 8–12 (CCQPT), 13–17 (CCRTT), 32–36 (CCQPS), 37–41 (CCVSS), 46–50 (CCHPT), 51–55 (CCQNT), 56–60 (CCRTT), 61–65 (CCQPI), 70–74 (CCQPS), 75–79 (CCSTP), 80–84 (CCQPT), 85–89 (CCGSS), 129–133 (CCRPA), 134–138 (CCETT), 139–143 (CCRTT), and 153–157 (CCQPS). The segment at 8 to 157 (CCQPTCCRTT…TCVYSCCQPS (150 aa)) is 16 X 5 AA repeats of C-C-[RQVSHE]-[SPTN]-[TASPI].

This sequence belongs to the KRTAP type 9 family. As to quaternary structure, interacts with hair keratins.

In terms of biological role, in the hair cortex, hair keratin intermediate filaments are embedded in an interfilamentous matrix, consisting of hair keratin-associated proteins (KRTAP), which are essential for the formation of a rigid and resistant hair shaft through their extensive disulfide bond cross-linking with abundant cysteine residues of hair keratins. The matrix proteins include the high-sulfur and high-glycine-tyrosine keratins. This is Keratin-associated protein 9-3 (KRTAP9-3) from Homo sapiens (Human).